Consider the following 369-residue polypeptide: Translocating chain-associated membrane protein 1-like 1 (369 aa).

Over 1-29 (MGLRKKSTKNPPVLSQEFILQNHADIVSC) the chain is Cytoplasmic. Residues 30–50 (VGMFFLLGLVFEGTAEASIVF) traverse the membrane as a helical segment. The Lumenal segment spans residues 51-81 (LTLQHSVAVPAAEEQATGSKSLYYYGVKDLA). The chain crosses the membrane as a helical span at residues 82–102 (TVFFYMLVAIIIHATIQEYVL). Residues 103–121 (DKINKRMQFTKAKQNKFNE) lie on the Cytoplasmic side of the membrane. One can recognise a TLC domain in the interval 117–326 (NKFNESGQFS…TLWLQRWVED (210 aa)). The chain crosses the membrane as a helical span at residues 122-142 (SGQFSVFYFFSCIWGTFILIS). Residues 143-164 (ENCLSDPTLIWKARPHSMMTFQ) lie on the Lumenal side of the membrane. Residues 165 to 185 (MKFFYISQLAYWFHAFPELYF) traverse the membrane as a helical segment. Topologically, residues 186–196 (QKTKKQDIPRQ) are cytoplasmic. A helical transmembrane segment spans residues 197–215 (LVYIGLHLFHITGAYLLYL). At 216 to 219 (NHLG) the chain is on the lumenal side. Residues 220–242 (LLLLVLHYFVELLSHMCGLFYFS) traverse the membrane as a helical segment. At 243-249 (DEKYQKG) the chain is on the cytoplasmic side. Residues 250 to 270 (ISLWAIVFILGRLVTLIVSVL) traverse the membrane as a helical segment. The Lumenal segment spans residues 271-297 (TVGFHLAGSQNRNPDALTGNVNVLAAK). The helical transmembrane segment at 298-318 (IAVLSSSCTIQAYVTWNLITL) threads the bilayer. Topologically, residues 319-369 (WLQRWVEDSNIQASCMKKKRSRSSKKRTENGVGVETSNRVDCPPKRKEKSS) are cytoplasmic. The segment at 335 to 369 (KKKRSRSSKKRTENGVGVETSNRVDCPPKRKEKSS) is disordered. Residues 360–369 (CPPKRKEKSS) show a composition bias toward basic and acidic residues.

Belongs to the TRAM family.

Its subcellular location is the endoplasmic reticulum membrane. Its function is as follows. Stimulatory or required for the translocation of secretory proteins across the ER membrane. This Homo sapiens (Human) protein is Translocating chain-associated membrane protein 1-like 1 (TRAM1L1).